The chain runs to 546 residues: Probable protein kinase UbiB (546 aa).

The region spanning 124 to 502 (DFSVEPLASA…HVRQGQSRYL (379 aa)) is the Protein kinase domain. Residues 130-138 (LASASIAQV) and lysine 153 contribute to the ATP site. Aspartate 288 (proton acceptor) is an active-site residue. 2 consecutive transmembrane segments (helical) span residues 501–521 (YLFG…IHRP) and 522–542 (EWGM…LIGW).

Belongs to the ABC1 family. UbiB subfamily.

It is found in the cell inner membrane. It functions in the pathway cofactor biosynthesis; ubiquinone biosynthesis [regulation]. Its function is as follows. Is probably a protein kinase regulator of UbiI activity which is involved in aerobic coenzyme Q (ubiquinone) biosynthesis. The sequence is that of Probable protein kinase UbiB from Klebsiella pneumoniae subsp. pneumoniae (strain ATCC 700721 / MGH 78578).